Reading from the N-terminus, the 569-residue chain is Urease subunit alpha (569 aa).

The Urease domain maps to 131 to 569 (GGIDAHIHFI…VPMAQRYFLF (439 aa)). Ni(2+) contacts are provided by H136, H138, and K219. At K219 the chain carries N6-carboxylysine. Substrate is bound at residue H221. Ni(2+) is bound by residues H248 and H274. H322 (proton donor) is an active-site residue. D362 provides a ligand contact to Ni(2+).

This sequence belongs to the metallo-dependent hydrolases superfamily. Urease alpha subunit family. In terms of assembly, heterotrimer of UreA (gamma), UreB (beta) and UreC (alpha) subunits. Three heterotrimers associate to form the active enzyme. Requires Ni cation as cofactor. Post-translationally, carboxylation allows a single lysine to coordinate two nickel ions.

The protein localises to the cytoplasm. It catalyses the reaction urea + 2 H2O + H(+) = hydrogencarbonate + 2 NH4(+). The protein operates within nitrogen metabolism; urea degradation; CO(2) and NH(3) from urea (urease route): step 1/1. This chain is Urease subunit alpha, found in Bacillus sp. (strain TB-90).